The chain runs to 216 residues: UPF0502 protein Pmen_2627 (216 aa).

It belongs to the UPF0502 family.

The protein is UPF0502 protein Pmen_2627 of Ectopseudomonas mendocina (strain ymp) (Pseudomonas mendocina).